We begin with the raw amino-acid sequence, 373 residues long: SAM domain-containing protein SAMSN-1 (373 aa).

A disordered region spans residues 1–72; sequence MLKRKPSNVS…GGGLGKKMRA (72 aa). The short motif at 20–25 is the Important for interaction with 14-3-3 proteins element; sequence RSSSFG. Ser-23 and Ser-34 each carry phosphoserine. A compositionally biased stretch (basic and acidic residues) spans 37-48; that stretch reads KPDDSTEAHEGD. The segment covering 50-61 has biased composition (polar residues); sequence TNGSGEQSKTSN. Residue Ser-74 is modified to Phosphoserine. Residue Thr-76 is modified to Phosphothreonine. 2 positions are modified to phosphoserine: Ser-90 and Ser-119. Residues 91-153 form a disordered region; sequence EEKDEEDGEN…DGTSNRDSFR (63 aa). Over residues 123–146 the composition is skewed to low complexity; it reads SDSMDSLYSGQSSSSGITSCSDGT. Position 160 is a phosphotyrosine (Tyr-160). Residues 163-224 enclose the SH3 domain; that stretch reads PFCGRARVHT…KFIYVDVISE (62 aa). The 65-residue stretch at 241–305 folds into the SAM domain; it reads KKSKTLQEFL…LSAAENFLEE (65 aa). Residues 337–359 are disordered; it reads DSGCYISSGNSDNGKEDLESENL.

In terms of assembly, interacts with FASLG. Interacts with phosphotyrosine containing proteins. Interacts (via SH3 domain) with CTTN. Interacts (phosphorylated at Ser-23) with YWHAB, YWHAE, YWHAG, YWHAH, YWHAZ and SFN. Interacts directly with SAP30 and HDAC1. Identified in a complex with SAP30 and HDAC1. Detected in peripheral blood B-cells (at protein level). Detected in spleen, liver and peripheral blood.

The protein localises to the nucleus. Its subcellular location is the cytoplasm. It localises to the cell projection. The protein resides in the ruffle. In terms of biological role, negative regulator of B-cell activation. Down-regulates cell proliferation (in vitro). Promotes RAC1-dependent membrane ruffle formation and reorganization of the actin cytoskeleton. Regulates cell spreading and cell polarization. Stimulates HDAC1 activity. Regulates LYN activity by modulating its tyrosine phosphorylation. This is SAM domain-containing protein SAMSN-1 (SAMSN1) from Homo sapiens (Human).